The primary structure comprises 476 residues: Aspartyl/glutamyl-tRNA(Asn/Gln) amidotransferase subunit B (476 aa).

It belongs to the GatB/GatE family. GatB subfamily. In terms of assembly, heterotrimer of A, B and C subunits.

It catalyses the reaction L-glutamyl-tRNA(Gln) + L-glutamine + ATP + H2O = L-glutaminyl-tRNA(Gln) + L-glutamate + ADP + phosphate + H(+). The catalysed reaction is L-aspartyl-tRNA(Asn) + L-glutamine + ATP + H2O = L-asparaginyl-tRNA(Asn) + L-glutamate + ADP + phosphate + 2 H(+). Allows the formation of correctly charged Asn-tRNA(Asn) or Gln-tRNA(Gln) through the transamidation of misacylated Asp-tRNA(Asn) or Glu-tRNA(Gln) in organisms which lack either or both of asparaginyl-tRNA or glutaminyl-tRNA synthetases. The reaction takes place in the presence of glutamine and ATP through an activated phospho-Asp-tRNA(Asn) or phospho-Glu-tRNA(Gln). The protein is Aspartyl/glutamyl-tRNA(Asn/Gln) amidotransferase subunit B of Lacticaseibacillus paracasei (strain ATCC 334 / BCRC 17002 / CCUG 31169 / CIP 107868 / KCTC 3260 / NRRL B-441) (Lactobacillus paracasei).